The primary structure comprises 517 residues: Sphingolipid C9-methyltransferase A (517 aa).

A run of 2 helical transmembrane segments spans residues 58–78 and 80–100; these read LLIL…GGGL and TTIF…WSIA. Residues 223–224, 286–291, and 316–317 each bind S-adenosyl-L-methionine; these read YT, TLGRNQ, and YR. An N-linked (GlcNAc...) asparagine glycan is attached at Asn290. Residue Asn478 is glycosylated (N-linked (GlcNAc...) asparagine).

This sequence belongs to the CFA/CMAS family.

Its subcellular location is the membrane. It catalyses the reaction a (4E,8E)-4-sphinga-4,8-dienine ceramide + S-adenosyl-L-methionine = a 9-methyl-(4E,8E)-sphinga-4,8-dienine ceramide + S-adenosyl-L-homocysteine + H(+). It functions in the pathway lipid metabolism; sphingolipid metabolism. Catalyzes methylation of the sphingoid base component of glucosylceramides (GluCers) at the C9-position. Sphingolipid C9-methylation requires 4,8-desaturated ceramides as substrates. Glucosylceramides play important roles in growth, differentiation and pathogenicity. The methyl group at the C9-position distinguishes fungal glucosylceramides from those of plants and animals and may thus play a role in host-pathogen interactions enabling the host to recognize the fungal attack and initiate specific defense responses. This Emericella nidulans (strain FGSC A4 / ATCC 38163 / CBS 112.46 / NRRL 194 / M139) (Aspergillus nidulans) protein is Sphingolipid C9-methyltransferase A.